The sequence spans 144 residues: D-aminoacyl-tRNA deacylase (144 aa).

The Gly-cisPro motif, important for rejection of L-amino acids signature appears at 136 to 137 (GP).

The protein belongs to the DTD family. In terms of assembly, homodimer.

Its subcellular location is the cytoplasm. The enzyme catalyses glycyl-tRNA(Ala) + H2O = tRNA(Ala) + glycine + H(+). The catalysed reaction is a D-aminoacyl-tRNA + H2O = a tRNA + a D-alpha-amino acid + H(+). Functionally, an aminoacyl-tRNA editing enzyme that deacylates mischarged D-aminoacyl-tRNAs. Also deacylates mischarged glycyl-tRNA(Ala), protecting cells against glycine mischarging by AlaRS. Acts via tRNA-based rather than protein-based catalysis; rejects L-amino acids rather than detecting D-amino acids in the active site. By recycling D-aminoacyl-tRNA to D-amino acids and free tRNA molecules, this enzyme counteracts the toxicity associated with the formation of D-aminoacyl-tRNA entities in vivo and helps enforce protein L-homochirality. This is D-aminoacyl-tRNA deacylase from Vibrio parahaemolyticus serotype O3:K6 (strain RIMD 2210633).